The chain runs to 252 residues: Imidazole glycerol phosphate synthase subunit HisF (252 aa).

Active-site residues include aspartate 11 and aspartate 130.

The protein belongs to the HisA/HisF family. In terms of assembly, heterodimer of HisH and HisF.

Its subcellular location is the cytoplasm. It catalyses the reaction 5-[(5-phospho-1-deoxy-D-ribulos-1-ylimino)methylamino]-1-(5-phospho-beta-D-ribosyl)imidazole-4-carboxamide + L-glutamine = D-erythro-1-(imidazol-4-yl)glycerol 3-phosphate + 5-amino-1-(5-phospho-beta-D-ribosyl)imidazole-4-carboxamide + L-glutamate + H(+). It functions in the pathway amino-acid biosynthesis; L-histidine biosynthesis; L-histidine from 5-phospho-alpha-D-ribose 1-diphosphate: step 5/9. IGPS catalyzes the conversion of PRFAR and glutamine to IGP, AICAR and glutamate. The HisF subunit catalyzes the cyclization activity that produces IGP and AICAR from PRFAR using the ammonia provided by the HisH subunit. The protein is Imidazole glycerol phosphate synthase subunit HisF of Halothermothrix orenii (strain H 168 / OCM 544 / DSM 9562).